Reading from the N-terminus, the 248-residue chain is Adenosylcobinamide-GDP ribazoletransferase (248 aa).

Helical transmembrane passes span Phe-36–Leu-56, Phe-59–Gly-79, Gly-114–Leu-134, Tyr-137–Leu-157, Ile-170–Leu-190, and Ala-199–Leu-219.

Belongs to the CobS family. Mg(2+) is required as a cofactor.

The protein localises to the cell membrane. It carries out the reaction alpha-ribazole + adenosylcob(III)inamide-GDP = adenosylcob(III)alamin + GMP + H(+). The enzyme catalyses alpha-ribazole 5'-phosphate + adenosylcob(III)inamide-GDP = adenosylcob(III)alamin 5'-phosphate + GMP + H(+). It functions in the pathway cofactor biosynthesis; adenosylcobalamin biosynthesis; adenosylcobalamin from cob(II)yrinate a,c-diamide: step 7/7. Its function is as follows. Joins adenosylcobinamide-GDP and alpha-ribazole to generate adenosylcobalamin (Ado-cobalamin). Also synthesizes adenosylcobalamin 5'-phosphate from adenosylcobinamide-GDP and alpha-ribazole 5'-phosphate. The polypeptide is Adenosylcobinamide-GDP ribazoletransferase (Clostridium botulinum (strain Kyoto / Type A2)).